The primary structure comprises 1064 residues: Rab GTPase-activating protein 1 (1064 aa).

Residues 1 to 101 (MDDKASVGKI…SNQLSASSTI (101 aa)) form a disordered region. The segment covering 7–22 (VGKISVSSDSVSTLNS) has biased composition (low complexity). S42 carries the phosphoserine modification. Residues 91–101 (LSNQLSASSTI) show a composition bias toward polar residues. The PID domain maps to 137–293 (EDSVVFNKLT…IFTFSVSLEI (157 aa)). S355 is modified (phosphoserine). The segment at 478-520 (RERRKTTASPSVRLPQSGSQSSMIPSPPEDDEEEDNDEPLLSG) is disordered. Over residues 484–501 (TASPSVRLPQSGSQSSMI) the composition is skewed to polar residues. Over residues 505–515 (PEDDEEEDNDE) the composition is skewed to acidic residues. The Rab-GAP TBC domain occupies 561-747 (GVPEALRGEV…HIIDLLLCEG (187 aa)). Residues 805 to 1038 (SQKKLKKFEK…HLGLALSEVQ (234 aa)) are a coiled coil. The residue at position 991 (T991) is a Phosphothreonine.

In terms of assembly, interacts with RAB6A and tubulin gamma.

It localises to the cytoplasm. The protein resides in the cytosol. It is found in the cytoskeleton. Its subcellular location is the microtubule organizing center. The protein localises to the centrosome. Its function is as follows. May act as a GTPase-activating protein of RAB6A. May play a role in microtubule nucleation by centrosome. May participate in a RAB6A-mediated pathway involved in the metaphase-anaphase transition. The polypeptide is Rab GTPase-activating protein 1 (Mus musculus (Mouse)).